The sequence spans 631 residues: Mercuric reductase (631 aa).

HMA domains are found at residues 2–66 (KKYR…YHPG) and 81–145 (KKYR…YQPG). The a metal cation site is built by Cys-13, Cys-16, Cys-92, and Cys-95. Positions 181, 201, and 206 each coordinate FAD. A disulfide bond links Cys-207 and Cys-212. Residues Lys-216, Asp-472, and Val-480 each contribute to the FAD site. The Hg(2+) site is built by Cys-628 and Cys-629.

Belongs to the class-I pyridine nucleotide-disulfide oxidoreductase family. As to quaternary structure, homodimer. The cofactor is FAD.

The catalysed reaction is Hg + NADP(+) + H(+) = Hg(2+) + NADPH. Its function is as follows. Resistance to Hg(2+) in bacteria appears to be governed by a specialized system which includes mercuric reductase. MerA protein is responsible for volatilizing mercury as Hg(0). This chain is Mercuric reductase (merA), found in Bacillus cereus.